The sequence spans 541 residues: Acyl-CoA ligase M9 (541 aa).

186–197 (AMSTSGTTGLPK) serves as a coordination point for AMP. Residues 445-519 (ELEAVLHQMP…DSLPRNSSGK (75 aa)) form an AMP-binding region.

The protein belongs to the ATP-dependent AMP-binding enzyme family.

It functions in the pathway secondary metabolite biosynthesis. Functionally, acyl-CoA ligase; part of the gene cluster that mediates the biosynthesis of squalestatin S1 (SQS1, also known as zaragozic acid A), a heavily oxidized fungal polyketide that offers potent cholesterol lowering activity by targeting squalene synthase (SS). SQS1 is composed of a 2,8-dioxobicyclic[3.2.1]octane-3,4,5-tricarboxyclic acid core that is connected to two lipophilic polyketide arms. These initial steps feature the priming of an unusual benzoic acid starter unit onto the highly reducing polyketide synthase pks2, followed by oxaloacetate extension and product release to generate a tricarboxylic acid containing product. The phenylalanine ammonia lyase (PAL) M7 and the acyl-CoA ligase M9 are involved in transforming phenylalanine into benzoyl-CoA. The citrate synthase-like protein R3 is involved in connecting the C-alpha-carbons of the hexaketide chain and oxaloacetate to afford the tricarboxylic acid unit. The potential hydrolytic enzymes, M8 and M10, are in close proximity to pks2 and may participate in product release. On the other side, the tetraketide arm is synthesized by a the squalestatin tetraketide synthase pks1 and enzymatically esterified to the core in the last biosynthetic step, by the acetyltransferase M4. The biosynthesis of the tetraketide must involve 3 rounds of chain extension. After the first and second rounds methyl-transfer occurs, and in all rounds of extension the ketoreductase and dehydratase are active. The enoyl reductase and C-MeT of pks1 are not active in the final round of extension. The acetyltransferase M4 appears to have a broad substrate selectivity for its acyl CoA substrate, allowing the in vitro synthesis of novel squalestatins. The biosynthesis of SQS1 requires several oxidative steps likely performed by oxidoreductases M1, R1 and R2. Finally, in support of the identification of the cluster as being responsible for SQS1 production, the cluster contains a gene encoding a putative squalene synthase (SS) R6, suggesting a likely mechanism for self-resistance. This Phoma sp. (strain ATCC 20986 / MF5453) protein is Acyl-CoA ligase M9.